Consider the following 1151-residue polypeptide: Cation channel sperm-associated protein subunit gamma 1 (1151 aa).

The N-terminal stretch at 1–38 (MVSRPAMSPVSPVWPRKPNLWAFWVLRLVLLLSLKSWA) is a signal peptide. At 39 to 1063 (EDTLQHCTWL…GLPLSSKRSS (1025 aa)) the chain is on the extracellular side. N-linked (GlcNAc...) asparagine glycosylation occurs at asparagine 356. Residues 1064–1084 (FIVMVSTSFFIALVVFYILFC) traverse the membrane as a helical segment. At 1085-1151 (LVWPHIVKAW…NVQAKRAKVA (67 aa)) the chain is on the cytoplasmic side. Residues 1113 to 1123 (SSSSGGFTLHS) are compositionally biased toward low complexity. The tract at residues 1113–1151 (SSSSGGFTLHSHSSEGSFEGPSRPGTKEDNVQAKRAKVA) is disordered.

It belongs to the CATSPERG family.

Its subcellular location is the membrane. This is Cation channel sperm-associated protein subunit gamma 1 (Catsperg1) from Mus musculus (Mouse).